Consider the following 400-residue polypeptide: Probable S-adenosylmethionine synthase (400 aa).

Lys-135–Asp-140 lines the ATP pocket.

It belongs to the AdoMet synthase 2 family. Mg(2+) is required as a cofactor.

It catalyses the reaction L-methionine + ATP + H2O = S-adenosyl-L-methionine + phosphate + diphosphate. It participates in amino-acid biosynthesis; S-adenosyl-L-methionine biosynthesis; S-adenosyl-L-methionine from L-methionine: step 1/1. In terms of biological role, catalyzes the formation of S-adenosylmethionine from methionine and ATP. The polypeptide is Probable S-adenosylmethionine synthase (mat) (Aquifex aeolicus (strain VF5)).